A 316-amino-acid chain; its full sequence is Adenine deaminase (316 aa).

Zn(2+) contacts are provided by His-14, His-16, and His-194. Glu-197 acts as the Proton donor in catalysis. Asp-275 lines the Zn(2+) pocket. Asp-276 is a binding site for substrate.

This sequence belongs to the metallo-dependent hydrolases superfamily. Adenosine and AMP deaminases family. Adenine deaminase type 2 subfamily. Zn(2+) is required as a cofactor.

It carries out the reaction adenine + H2O + H(+) = hypoxanthine + NH4(+). Functionally, catalyzes the hydrolytic deamination of adenine to hypoxanthine. Plays an important role in the purine salvage pathway and in nitrogen catabolism. This chain is Adenine deaminase, found in Stutzerimonas stutzeri (strain A1501) (Pseudomonas stutzeri).